The chain runs to 449 residues: MGKYFGTSGIREVFNEKLTPELALKVGKALGTYLGGGKVVIGKDTRTSGDVIKSAVISGLLSTGVDVIDIGLAPTPLTGFAIKLYGADAGVTITASHNPPEYNGIKVWQANGMAYTSEMERELESIMDSGNFKKAPWNEIGTLRRADPSEEYINAALKFVKLENSYTVVLDSGNGAGSVVSPYLQRELGNRVISLNSHPSGFFVRELEPNAKSLSALAKTVRVMKADVGIAHDGDADRIGVVDDQGNFVEYEVMLSLIAGYMLRKFGKGKIVTTVDAGFALDDYLRPLGGEVIRTRVGDVAVADELAKHGGVFGGEPSGTWIIPQWNLTPDGIFAGALVLEMIDRLGPISELAKEVPRYVTLRAKIPCPNEKKAKAMEIIAREALKTFDYEGLIDIDGIRIENGDWWILFRPSGTEPIMRITLEAHEEEKAKELMGKAERLVKKAISEA.

The active-site Phosphoserine intermediate is Ser-96. The Mg(2+) site is built by Ser-96, Asp-233, Asp-235, and Asp-237. Ser-96 bears the Phosphoserine mark.

This sequence belongs to the phosphohexose mutase family. Requires Mg(2+) as cofactor. Activated by phosphorylation.

It catalyses the reaction alpha-D-glucosamine 1-phosphate = D-glucosamine 6-phosphate. Its function is as follows. Catalyzes the conversion of glucosamine-6-phosphate to glucosamine-1-phosphate. Does not display phosphoglucomutase (PGM) or phosphomannomutase (PMM) activities. The polypeptide is Probable phosphoglucosamine mutase (glmM) (Thermococcus kodakarensis (strain ATCC BAA-918 / JCM 12380 / KOD1) (Pyrococcus kodakaraensis (strain KOD1))).